The sequence spans 135 residues: Small ribosomal subunit protein bS16 (135 aa).

A compositionally biased stretch (basic and acidic residues) spans 105–120 (DEKKKPVLKPKTEKAA). Residues 105–135 (DEKKKPVLKPKTEKAAPEAAAPEAEATEEQA) form a disordered region.

This sequence belongs to the bacterial ribosomal protein bS16 family.

The sequence is that of Small ribosomal subunit protein bS16 from Clavibacter sepedonicus (Clavibacter michiganensis subsp. sepedonicus).